The chain runs to 550 residues: CTP synthase (550 aa).

Residues 1–270 are amidoligase domain; that stretch reads MTKFVFVTGG…DRLICEELRL (270 aa). Ser-13 is a CTP binding site. Ser-13 provides a ligand contact to UTP. ATP contacts are provided by residues 14 to 19 and Asp-71; that span reads SLGKGI. Positions 71 and 144 each coordinate Mg(2+). Residues 151–153, 191–196, and Lys-227 contribute to the CTP site; these read DIE and KTKPTQ. UTP-binding positions include 191 to 196 and Lys-227; that span reads KTKPTQ. In terms of domain architecture, Glutamine amidotransferase type-1 spans 295–547; the sequence is TIGMVGKYVD…VEAALASQQR (253 aa). Gly-356 is a binding site for L-glutamine. The active-site Nucleophile; for glutamine hydrolysis is Cys-383. Residues 384–387, Glu-407, and Arg-473 each bind L-glutamine; that span reads LGMQ. Active-site residues include His-520 and Glu-522.

The protein belongs to the CTP synthase family. As to quaternary structure, homotetramer.

The enzyme catalyses UTP + L-glutamine + ATP + H2O = CTP + L-glutamate + ADP + phosphate + 2 H(+). It catalyses the reaction L-glutamine + H2O = L-glutamate + NH4(+). The catalysed reaction is UTP + NH4(+) + ATP = CTP + ADP + phosphate + 2 H(+). It participates in pyrimidine metabolism; CTP biosynthesis via de novo pathway; CTP from UDP: step 2/2. Allosterically activated by GTP, when glutamine is the substrate; GTP has no effect on the reaction when ammonia is the substrate. The allosteric effector GTP functions by stabilizing the protein conformation that binds the tetrahedral intermediate(s) formed during glutamine hydrolysis. Inhibited by the product CTP, via allosteric rather than competitive inhibition. Catalyzes the ATP-dependent amination of UTP to CTP with either L-glutamine or ammonia as the source of nitrogen. Regulates intracellular CTP levels through interactions with the four ribonucleotide triphosphates. The sequence is that of CTP synthase from Cupriavidus taiwanensis (strain DSM 17343 / BCRC 17206 / CCUG 44338 / CIP 107171 / LMG 19424 / R1) (Ralstonia taiwanensis (strain LMG 19424)).